A 509-amino-acid chain; its full sequence is ATP synthase subunit alpha (509 aa).

Gly169–Thr176 is an ATP binding site.

It belongs to the ATPase alpha/beta chains family. In terms of assembly, F-type ATPases have 2 components, CF(1) - the catalytic core - and CF(0) - the membrane proton channel. CF(1) has five subunits: alpha(3), beta(3), gamma(1), delta(1), epsilon(1). CF(0) has three main subunits: a(1), b(2) and c(9-12). The alpha and beta chains form an alternating ring which encloses part of the gamma chain. CF(1) is attached to CF(0) by a central stalk formed by the gamma and epsilon chains, while a peripheral stalk is formed by the delta and b chains.

The protein localises to the cell inner membrane. It carries out the reaction ATP + H2O + 4 H(+)(in) = ADP + phosphate + 5 H(+)(out). Its function is as follows. Produces ATP from ADP in the presence of a proton gradient across the membrane. The alpha chain is a regulatory subunit. In Bradyrhizobium diazoefficiens (strain JCM 10833 / BCRC 13528 / IAM 13628 / NBRC 14792 / USDA 110), this protein is ATP synthase subunit alpha.